The following is a 64-amino-acid chain: Temporin-ALg (64 aa).

The N-terminal stretch at M1 to C22 is a signal peptide. The propeptide occupies E23–R46. L62 is subject to Leucine amide.

The protein belongs to the frog skin active peptide (FSAP) family. Temporin subfamily. Expressed by the skin glands.

The protein localises to the secreted. In terms of biological role, antimicrobial peptide with activity against Gram-positive and Gram-negative bacteria and against fungi. Has been tested against S.aureus (MIC=2.5 ug/mL), B.pumilus (MIC=2.5 ug/mL), B.cereus (MIC=30.0 ug/mL), E.coli (MIC=5.0 ug/mL), B.dysenteriae (MIC=10.0 ug/mL), A.cacoaceticus (MIC=30.0 ug/mL), P.aeruginosa (MIC=7.5 ug/mL) and C.albicans (MIC=1.25 ug/mL). Also shows a weak hemolytic activity. In Amolops loloensis (Lolokou Sucker Frog), this protein is Temporin-ALg.